The chain runs to 76 residues: Waprin-Rha1 (76 aa).

The signal sequence occupies residues M1–A24. The region spanning Q25–S75 is the WAP domain. Cystine bridges form between C32–C62, C45–C66, C49–C61, and C55–C71.

Belongs to the venom waprin family. As to expression, expressed by the venom gland.

The protein resides in the secreted. Damages membranes of susceptible bacteria. Has no hemolytic activity. Not toxic to mice. Does not inhibit the proteinases elastase and cathepsin G. In Rhabdophis tigrinus tigrinus (Tiger keelback snake), this protein is Waprin-Rha1.